A 1295-amino-acid chain; its full sequence is DNA-directed RNA polymerase subunit beta' (1295 aa).

Residues Cys-60, Cys-62, Cys-75, and Cys-78 each contribute to the Zn(2+) site. Mg(2+) is bound by residues Asp-516, Asp-518, and Asp-520. Positions 841, 914, 921, and 924 each coordinate Zn(2+).

The protein belongs to the RNA polymerase beta' chain family. In terms of assembly, the RNAP catalytic core consists of 2 alpha, 1 beta, 1 beta' and 1 omega subunit. When a sigma factor is associated with the core the holoenzyme is formed, which can initiate transcription. Mg(2+) serves as cofactor. The cofactor is Zn(2+).

The enzyme catalyses RNA(n) + a ribonucleoside 5'-triphosphate = RNA(n+1) + diphosphate. Its function is as follows. DNA-dependent RNA polymerase catalyzes the transcription of DNA into RNA using the four ribonucleoside triphosphates as substrates. This chain is DNA-directed RNA polymerase subunit beta', found in Dehalococcoides mccartyi (strain CBDB1).